Here is a 441-residue protein sequence, read N- to C-terminus: Xaa-Pro dipeptidase (441 aa).

Residues D244, D255, H336, E381, and E420 each contribute to the Mn(2+) site.

It belongs to the peptidase M24B family. Bacterial-type prolidase subfamily. It depends on Mn(2+) as a cofactor.

The enzyme catalyses Xaa-L-Pro dipeptide + H2O = an L-alpha-amino acid + L-proline. In terms of biological role, splits dipeptides with a prolyl residue in the C-terminal position. In Xanthomonas campestris pv. campestris (strain 8004), this protein is Xaa-Pro dipeptidase.